A 39-amino-acid chain; its full sequence is Photosystem II reaction center protein J (39 aa).

A helical transmembrane segment spans residues 7–27; the sequence is IPLWIVAVVVGLGVVTVVGLF.

The protein belongs to the PsbJ family. As to quaternary structure, PSII is composed of 1 copy each of membrane proteins PsbA, PsbB, PsbC, PsbD, PsbE, PsbF, PsbH, PsbI, PsbJ, PsbK, PsbL, PsbM, PsbT, PsbX, PsbY, PsbZ, Psb30/Ycf12, peripheral proteins PsbO, CyanoQ (PsbQ), PsbU, PsbV and a large number of cofactors. It forms dimeric complexes.

The protein localises to the cellular thylakoid membrane. Its function is as follows. One of the components of the core complex of photosystem II (PSII). PSII is a light-driven water:plastoquinone oxidoreductase that uses light energy to abstract electrons from H(2)O, generating O(2) and a proton gradient subsequently used for ATP formation. It consists of a core antenna complex that captures photons, and an electron transfer chain that converts photonic excitation into a charge separation. The chain is Photosystem II reaction center protein J from Synechococcus sp. (strain JA-3-3Ab) (Cyanobacteria bacterium Yellowstone A-Prime).